A 199-amino-acid chain; its full sequence is Recombination protein RecR (199 aa).

A C4-type zinc finger spans residues 58–73 (CRTCFSLSDQPECRIC). The region spanning 81–176 (SIICVVEKPT…NVTRIASGVP (96 aa)) is the Toprim domain.

It belongs to the RecR family.

Functionally, may play a role in DNA repair. It seems to be involved in an RecBC-independent recombinational process of DNA repair. It may act with RecF and RecO. The protein is Recombination protein RecR of Desulforapulum autotrophicum (strain ATCC 43914 / DSM 3382 / VKM B-1955 / HRM2) (Desulfobacterium autotrophicum).